A 248-amino-acid chain; its full sequence is 4-hydroxy-tetrahydrodipicolinate reductase (248 aa).

NAD(+)-binding positions include 9–14 (GAKGRV), 77–79 (GTT), and 104–107 (APNF). His134 acts as the Proton donor/acceptor in catalysis. His135 lines the (S)-2,3,4,5-tetrahydrodipicolinate pocket. Lys138 functions as the Proton donor in the catalytic mechanism. A (S)-2,3,4,5-tetrahydrodipicolinate-binding site is contributed by 144 to 145 (GT).

It belongs to the DapB family.

The protein resides in the cytoplasm. It catalyses the reaction (S)-2,3,4,5-tetrahydrodipicolinate + NAD(+) + H2O = (2S,4S)-4-hydroxy-2,3,4,5-tetrahydrodipicolinate + NADH + H(+). It carries out the reaction (S)-2,3,4,5-tetrahydrodipicolinate + NADP(+) + H2O = (2S,4S)-4-hydroxy-2,3,4,5-tetrahydrodipicolinate + NADPH + H(+). The protein operates within amino-acid biosynthesis; L-lysine biosynthesis via DAP pathway; (S)-tetrahydrodipicolinate from L-aspartate: step 4/4. Functionally, catalyzes the conversion of 4-hydroxy-tetrahydrodipicolinate (HTPA) to tetrahydrodipicolinate. This chain is 4-hydroxy-tetrahydrodipicolinate reductase, found in Corynebacterium efficiens (strain DSM 44549 / YS-314 / AJ 12310 / JCM 11189 / NBRC 100395).